We begin with the raw amino-acid sequence, 121 residues long: Large ribosomal subunit protein uL18 (121 aa).

Belongs to the universal ribosomal protein uL18 family. In terms of assembly, part of the 50S ribosomal subunit; part of the 5S rRNA/L5/L18/L25 subcomplex. Contacts the 5S and 23S rRNAs.

In terms of biological role, this is one of the proteins that bind and probably mediate the attachment of the 5S RNA into the large ribosomal subunit, where it forms part of the central protuberance. In Ureaplasma urealyticum serovar 10 (strain ATCC 33699 / Western), this protein is Large ribosomal subunit protein uL18.